The primary structure comprises 486 residues: Adenylate kinase 8 (486 aa).

Adenylate kinase regions lie at residues 58-258 (PRII…NFIC) and 269-471 (PRIL…SRLV). Residue 67–72 (ASGKKT) participates in ATP binding. Positions 87–112 (TFCDILKDDSDLTRAAQSYYDKKQNV) are NMP 1. Residues 139-142 (AIPK) and Arg202 each bind AMP. The segment at 176 to 205 (GKRIDPVTGDVYHVTFMWPESEEVAQRLET) is LID 1. Residue 278 to 283 (GAGRNL) participates in ATP binding. Positions 298–327 (CCGELLKAVSADESHMGELIKPYLESEQQV) are NMP 2. AMP is bound by residues 325-327 (QQV) and 354-357 (GFPR). Residues 391–424 (LRAVDPVTGEWYHSVYKPPPGPEVQARLRFNPQH) are LID 2. Arg392 is a binding site for ATP. AMP is bound at residue Arg432.

Belongs to the adenylate kinase family.

It localises to the cytoplasm. The protein localises to the cytosol. It catalyses the reaction AMP + ATP = 2 ADP. It carries out the reaction a 2'-deoxyribonucleoside 5'-diphosphate + ATP = a 2'-deoxyribonucleoside 5'-triphosphate + ADP. The enzyme catalyses a ribonucleoside 5'-diphosphate + ATP = a ribonucleoside 5'-triphosphate + ADP. Nucleoside monophosphate (NMP) kinase that catalyzes the reversible transfer of the terminal phosphate group between nucleoside triphosphates and monophosphates. Has highest activity toward AMP, and weaker activity toward dAMP, CMP and dCMP. Also displays broad nucleoside diphosphate kinase activity. This Danio rerio (Zebrafish) protein is Adenylate kinase 8 (ak8).